The sequence spans 663 residues: UvrABC system protein B (663 aa).

Over residues 1 to 10 the composition is skewed to basic and acidic residues; the sequence is MIDKRDDKPF. The segment at 1 to 23 is disordered; that stretch reads MIDKRDDKPFKLKSKYKPSGDQP. The 241-residue stretch at 31–271 folds into the Helicase ATP-binding domain; that stretch reads DNIEGGEKAQ…EQSIAKIQAE (241 aa). ATP is bound at residue 44-51; sequence GATGTGKT. Residues 97–120 carry the Beta-hairpin motif; that stretch reads YYDYYQPEAYVPSSDTYIEKDSSV. The 167-residue stretch at 435 to 601 folds into the Helicase C-terminal domain; that stretch reads QMDDLLGEIN…TIKKDIRGLI (167 aa). The UVR domain occupies 627–662; that stretch reads KEAINALQKQMQEAAELLDFELAAQMRDLILELKLM.

The protein belongs to the UvrB family. Forms a heterotetramer with UvrA during the search for lesions. Interacts with UvrC in an incision complex.

The protein resides in the cytoplasm. The UvrABC repair system catalyzes the recognition and processing of DNA lesions. A damage recognition complex composed of 2 UvrA and 2 UvrB subunits scans DNA for abnormalities. Upon binding of the UvrA(2)B(2) complex to a putative damaged site, the DNA wraps around one UvrB monomer. DNA wrap is dependent on ATP binding by UvrB and probably causes local melting of the DNA helix, facilitating insertion of UvrB beta-hairpin between the DNA strands. Then UvrB probes one DNA strand for the presence of a lesion. If a lesion is found the UvrA subunits dissociate and the UvrB-DNA preincision complex is formed. This complex is subsequently bound by UvrC and the second UvrB is released. If no lesion is found, the DNA wraps around the other UvrB subunit that will check the other stand for damage. This chain is UvrABC system protein B, found in Streptococcus pyogenes serotype M2 (strain MGAS10270).